A 280-amino-acid chain; its full sequence is Succinate dehydrogenase [ubiquinone] iron-sulfur subunit, mitochondrial (280 aa).

A mitochondrion-targeting transit peptide spans 1–28; sequence MAAVVALSLRRRLPATTLGGACLQASRG. The 2Fe-2S ferredoxin-type domain maps to 40 to 133; the sequence is KKFAIYRWDP…VSKIYPLPHM (94 aa). 2 positions are modified to N6-acetyllysine: lysine 51 and lysine 55. Positions 93, 98, 101, and 113 each coordinate [2Fe-2S] cluster. The interval 146–218 is interaction with SDHAF1; it reads FYAQYKSIEP…PAVLMQAYRW (73 aa). Residues 176–206 form the 4Fe-4S ferredoxin-type domain; sequence EREKLDGLYECILCACCSTSCPSYWWNGDKY. The [4Fe-4S] cluster site is built by cysteine 186, cysteine 189, and cysteine 192. A [3Fe-4S] cluster-binding site is contributed by cysteine 196. Residue tryptophan 201 coordinates a ubiquinone. [3Fe-4S] cluster contacts are provided by cysteine 243 and cysteine 249. Residue cysteine 253 participates in [4Fe-4S] cluster binding.

The protein belongs to the succinate dehydrogenase/fumarate reductase iron-sulfur protein family. Component of complex II composed of four subunits: the flavoprotein (FP) SDHA, iron-sulfur protein (IP) SDHB, and a cytochrome b560 composed of SDHC and SDHD. Interacts with SDHAF1; the interaction is required for iron-sulfur cluster incorporation into SDHB. As to quaternary structure, (Microbial infection) Interacts with JC virus small t antigen. The cofactor is [2Fe-2S] cluster. [3Fe-4S] cluster is required as a cofactor. [4Fe-4S] cluster serves as cofactor.

The protein resides in the mitochondrion inner membrane. The enzyme catalyses a quinone + succinate = fumarate + a quinol. It carries out the reaction (R)-malate + a quinone = enol-oxaloacetate + a quinol. It catalyses the reaction (S)-malate + a quinone = enol-oxaloacetate + a quinol. It participates in carbohydrate metabolism; tricarboxylic acid cycle; fumarate from succinate (eukaryal route): step 1/1. Its activity is regulated as follows. Enol-oxaloacetate inhibits the succinate dehydrogenase activity. In terms of biological role, iron-sulfur protein (IP) subunit of the succinate dehydrogenase complex (mitochondrial respiratory chain complex II), responsible for transferring electrons from succinate to ubiquinone (coenzyme Q). SDH also oxidizes malate to the non-canonical enol form of oxaloacetate, enol-oxaloacetate. Enol-oxaloacetate, which is a potent inhibitor of the succinate dehydrogenase activity, is further isomerized into keto-oxaloacetate. The sequence is that of Succinate dehydrogenase [ubiquinone] iron-sulfur subunit, mitochondrial (SDHB) from Homo sapiens (Human).